Reading from the N-terminus, the 217-residue chain is Translation initiation factor 6 (217 aa).

The protein belongs to the eIF-6 family.

Binds to the 50S ribosomal subunit and prevents its association with the 30S ribosomal subunit to form the 70S initiation complex. In Methanococcoides burtonii (strain DSM 6242 / NBRC 107633 / OCM 468 / ACE-M), this protein is Translation initiation factor 6.